A 417-amino-acid polypeptide reads, in one-letter code: MSLSNKLTLDKLDVKGKRVVMRVDFNVPMKNNQITNNQRIKAAVPSIKFCLDNGAKSVVLMSHLGRPDGVPMPDKYSLEPVAAELKSLLGKDVLFLKDCVGPEVENACANPAAGTVILLENLRFHVEEEGKGKDASGNKIKAEPAKIDAFRASLSKLGDVYVNDAFGTAHRAHSSMVGVNLPQKAGGFLMKKELNYFAKALESPERPFLAILGGAKVADKIQLINNMLDKVNEMIIGGGMAFTFLKVLNNMEIGTSLYDEEGAKIVKDLMAKAEKNGVKITLPVDFVTADKFDENAKTGQATVASGIPAGWMGLDCGTESSKKYAEAVARAKQIVWNGPVGVFEWEAFARGTKSLMDEVVKATSRGCITIIGGGDTATCCAKWNTEDKVSHVSTGGGASLELLEGKVLPGVDALSNV.

At S2 the chain carries N-acetylserine. 2 positions are modified to phosphoserine: S2 and S4. An N6-succinyllysine modification is found at K6. K11 carries the post-translational modification N6-acetyllysine. (2R)-3-phosphoglycerate-binding residues include V23, D24, F25, N26, Q38, and R39. Residues 38–43 (QRIKAA) form a mitochondrial targeting region exposed following cis-trans isomerization by PIN1 and recognized by the TOM complex for mitochondrial translocation of the protein region. K48 carries the post-translational modification N6-acetyllysine; alternate. Position 48 is an N6-succinyllysine; alternate (K48). The (2R)-3-phosphoglycerate site is built by S62, H63, G65, and R66. N6-acetyllysine is present on K75. At Y76 the chain carries Phosphotyrosine. K86 and K91 each carry N6-acetyllysine. K97 is modified (N6-acetyllysine; alternate). K97 carries the N6-(2-hydroxyisobutyryl)lysine; alternate modification. (2R)-3-phosphoglycerate contacts are provided by L122 and R123. K131 bears the N6-acetyllysine; alternate mark. K131 is modified (N6-malonyllysine; alternate). Residue K146 is modified to N6-acetyllysine. Residues H170 and R171 each contribute to the (2R)-3-phosphoglycerate site. The residue at position 191 (K191) is an N6-succinyllysine. Residue Y196 is modified to Phosphotyrosine. K199 is subject to N6-acetyllysine. At S203 the chain carries Phosphoserine. G214 serves as a coordination point for ADP. G214 lines the CDP pocket. AMP-binding residues include A215 and K216. A215 serves as a coordination point for ATP. A215 is a binding site for Mg(2+). K216 is subject to N6-(2-hydroxyisobutyryl)lysine. The Mg(2+) site is built by A218 and D219. D219 is a binding site for CDP. K220 lines the AMP pocket. K220 is a binding site for ATP. Residue K220 is modified to N6-(2-hydroxyisobutyryl)lysine. G238 lines the ADP pocket. G238 contributes to the CDP binding site. G239 contacts AMP. G239 is a binding site for ATP. N6-acetyllysine is present on residues K267 and K291. AMP is bound at residue G313. Position 313 (G313) interacts with ATP. K323 is modified (N6-(2-hydroxyisobutyryl)lysine). The CDP site is built by G338, V340, and F343. F343 is an ADP binding site. E344 is an AMP binding site. Residue E344 participates in ATP binding. K361 is modified (N6-acetyllysine). ATP is bound by residues D375 and T376. D375 is a Mg(2+) binding site.

This sequence belongs to the phosphoglycerate kinase family. Monomer. Interacts with kinase MAPK1/ERK2; the interaction is direct, occurs under hypoxic conditions, and promotes its interaction with PIN1. Interacts with peptidyl-prolyl cis-trans isomerase PIN1; the interaction is direct, occurs under hypoxic conditions, and targets the protein to the mitochondrion by promoting interactions with the TOM complex. Interacts with mitochondrial circRNA mcPGK1 (via its 2nd stem-loop); the interaction is direct and targets the protein to the mitochondrion by promoting interactions with the TOM complex. Interacts with pyruvate dehydrogenase kinase PDK1; the interaction is direct, occurs under hypoxic conditions and leads to PDK1-mediated inhibition of pyruvate dehydrogenase complex activity. Requires Mg(2+) as cofactor. Post-translationally, phosphorylated at Ser-203 by MAPK1/ERK2 under hypoxic conditions, which promotes its mitochondrial targeting.

The protein localises to the cytoplasm. Its subcellular location is the cytosol. It is found in the mitochondrion matrix. It carries out the reaction (2R)-3-phosphoglycerate + ATP = (2R)-3-phospho-glyceroyl phosphate + ADP. The enzyme catalyses L-seryl-[protein] + ATP = O-phospho-L-seryl-[protein] + ADP + H(+). Its pathway is carbohydrate degradation; glycolysis; pyruvate from D-glyceraldehyde 3-phosphate: step 2/5. Functionally, catalyzes one of the two ATP producing reactions in the glycolytic pathway via the reversible conversion of 1,3-diphosphoglycerate to 3-phosphoglycerate. Both L- and D- forms of purine and pyrimidine nucleotides can be used as substrates, but the activity is much lower on pyrimidines. In addition to its role as a glycolytic enzyme, it seems that PGK-1 acts as a polymerase alpha cofactor protein (primer recognition protein). Acts as a protein kinase when localized to the mitochondrion where it phosphorylates pyruvate dehydrogenase kinase PDK1 to inhibit pyruvate dehydrogenase complex activity and suppress the formation of acetyl-coenzyme A from pyruvate, and consequently inhibit oxidative phosphorylation and promote glycolysis. May play a role in sperm motility. This chain is Phosphoglycerate kinase 1 (PGK1), found in Cricetulus griseus (Chinese hamster).